A 123-amino-acid polypeptide reads, in one-letter code: Small ribosomal subunit protein uS13 (123 aa).

Residues 97-123 form a disordered region; that stretch reads PVRGQRTKTNARTRKGPRKTVGVRRKK.

The protein belongs to the universal ribosomal protein uS13 family. As to quaternary structure, part of the 30S ribosomal subunit. Forms a loose heterodimer with protein S19. Forms two bridges to the 50S subunit in the 70S ribosome.

Located at the top of the head of the 30S subunit, it contacts several helices of the 16S rRNA. In the 70S ribosome it contacts the 23S rRNA (bridge B1a) and protein L5 of the 50S subunit (bridge B1b), connecting the 2 subunits; these bridges are implicated in subunit movement. Contacts the tRNAs in the A and P-sites. This chain is Small ribosomal subunit protein uS13, found in Pelotomaculum thermopropionicum (strain DSM 13744 / JCM 10971 / SI).